Consider the following 703-residue polypeptide: MNPVIKKFQFGQSTVTLETGRIARQASGAVLVTVDDDVSVLVTVVGAKQADPGKGFFPLSVHYQEKTYAAGKIPGGFFKREGRPSEKETLTSRLIDRPIRPLFPEGFMNEVQVVCTVVSTSKKTDPDIAAMIGTSAALAISGIPFDGPIGAARVAFHESTGYLLNPTYEQLAASSLDMVVAGTEEAVLMVESEAKELTEDQMLGAVLFAHDEFQSVIKAVKELAAEAAKPTWDWDWAAAPEATELLGAIRAEFGEAISQAYTITVKADRYARLGELKDQVVAKLSGEEGQPSASDVKAAFGEIEYRTVRENIVNGKPRIDGRDTRTVRPLNIEVGVLPKTHGSALFTRGETQALVVATLGTARDAQLLDTLEGEKKDPFMLHYNFPPFSVGECGRMGGAGRREIGHGRLARRSVQAMLPAADVFPYTIRVVSEITESNGSSSMASVCGASLALMDAGVPMKAPVAGIAMGLVKEGEKFAVLTDILGDEDHLGDMDFKVAGTAKGVTALQMDIKIKGITEEIMEIALGQALEARLNILGQMNQIIGQSRTELSANAPTMIAMKIDTDKIRDVIGKGGATIRAICEETKASIDIEDDGSIKIFGETKEAAEAARQRVLGITAEAEIGKIYVGKVERIVDFGAFVNILPGKDGLVHISMLSDARVEKVTDILKEGQEVEVLVLDVDNRGRIKLSIKDVAAAKASGV.

D489 and D495 together coordinate Mg(2+). In terms of domain architecture, KH spans 556 to 615 (PTMIAMKIDTDKIRDVIGKGGATIRAICEETKASIDIEDDGSIKIFGETKEAAEAARQRV). An S1 motif domain is found at 625-693 (GKIYVGKVER…NRGRIKLSIK (69 aa)).

This sequence belongs to the polyribonucleotide nucleotidyltransferase family. Component of the RNA degradosome, which is a multiprotein complex involved in RNA processing and mRNA degradation. Requires Mg(2+) as cofactor.

Its subcellular location is the cytoplasm. It catalyses the reaction RNA(n+1) + phosphate = RNA(n) + a ribonucleoside 5'-diphosphate. Functionally, involved in mRNA degradation. Catalyzes the phosphorolysis of single-stranded polyribonucleotides processively in the 3'- to 5'-direction. The sequence is that of Polyribonucleotide nucleotidyltransferase from Pseudomonas fluorescens (strain ATCC BAA-477 / NRRL B-23932 / Pf-5).